The primary structure comprises 205 residues: SREBP regulating gene protein (205 aa).

Over 1-16 (MALYVSMVWRKILRKR) the chain is Cytoplasmic. Residues 17–35 (WVLGVVFGLSLIYFLTSTF) traverse the membrane as a helical segment. Topologically, residues 36 to 205 (KQEERTVRDR…GESPPELLPI (170 aa)) are lumenal. Residue asparagine 67 is glycosylated (N-linked (GlcNAc...) asparagine).

The protein belongs to the SPRING family.

It is found in the golgi apparatus membrane. In terms of biological role, positively regulates hepatic SREBP signaling pathway by modulating the proper localization of SCAP (SREBP cleavage-activating protein) to the endoplasmic reticulum, thereby controlling the level of functional SCAP. The chain is SREBP regulating gene protein from Xenopus laevis (African clawed frog).